Here is a 157-residue protein sequence, read N- to C-terminus: Urease accessory protein UreE (157 aa).

The protein belongs to the UreE family.

It is found in the cytoplasm. Involved in urease metallocenter assembly. Binds nickel. Probably functions as a nickel donor during metallocenter assembly. The chain is Urease accessory protein UreE from Corynebacterium glutamicum (strain ATCC 13032 / DSM 20300 / JCM 1318 / BCRC 11384 / CCUG 27702 / LMG 3730 / NBRC 12168 / NCIMB 10025 / NRRL B-2784 / 534).